The primary structure comprises 460 residues: UDP-N-acetylmuramoylalanine--D-glutamate ligase (460 aa).

120–126 contacts ATP; that stretch reads GSNGKTT.

It belongs to the MurCDEF family.

Its subcellular location is the cytoplasm. It catalyses the reaction UDP-N-acetyl-alpha-D-muramoyl-L-alanine + D-glutamate + ATP = UDP-N-acetyl-alpha-D-muramoyl-L-alanyl-D-glutamate + ADP + phosphate + H(+). Its pathway is cell wall biogenesis; peptidoglycan biosynthesis. Its function is as follows. Cell wall formation. Catalyzes the addition of glutamate to the nucleotide precursor UDP-N-acetylmuramoyl-L-alanine (UMA). In Lactobacillus delbrueckii subsp. bulgaricus (strain ATCC BAA-365 / Lb-18), this protein is UDP-N-acetylmuramoylalanine--D-glutamate ligase.